The sequence spans 666 residues: Nuclear distribution protein nudE homolog 1 (666 aa).

Residues 14–195 (EEEIAHYREK…KDQLARAIAT (182 aa)) adopt a coiled-coil conformation. Disordered stretches follow at residues 40–64 (EFQQSSKELEDEMEQELAANDKQQA), 220–310 (DDIN…SGIP), 369–388 (KRVTSTTSTTSSTTTAPAPH), and 397–666 (DHNT…KVKK). Over residues 251–274 (RSGTMSSIPVASPSTKRFSQQIPH) the composition is skewed to polar residues. Low complexity-rich tracts occupy residues 275 to 287 (SPSFSTLSRSTTS) and 372 to 383 (TSTTSTTSSTTT). The segment covering 400–410 (TTPTAQSQQFP) has biased composition (polar residues). Low complexity-rich tracts occupy residues 449–465 (PTFRSSSTTSNRSLPSR), 473–485 (ASGSARSTTSGTA), and 536–554 (SATPTSGFSSFSASASTSN). Polar residues-rich tracts occupy residues 587-599 (RQSLSGAGPTPTT) and 614-638 (SSLSNMDKPSLMSASPGSRTPSGRP).

This sequence belongs to the nudE family. Self-associates. Interacts with PAC1.

It is found in the cytoplasm. It localises to the cytoskeleton. Functionally, required for nuclear migration. This is Nuclear distribution protein nudE homolog 1 (NDE1) from Cryptococcus neoformans var. neoformans serotype D (strain B-3501A) (Filobasidiella neoformans).